A 152-amino-acid chain; its full sequence is UPF0178 protein Bcer98_3021 (152 aa).

The protein belongs to the UPF0178 family.

The sequence is that of UPF0178 protein Bcer98_3021 from Bacillus cytotoxicus (strain DSM 22905 / CIP 110041 / 391-98 / NVH 391-98).